The primary structure comprises 325 residues: Elongation factor P--(R)-beta-lysine ligase (325 aa).

Position 76-78 (76-78 (SPE)) interacts with substrate. ATP is bound by residues 100 to 102 (RNE) and N109. Substrate is bound at residue Y118. 244-245 (EL) is a binding site for ATP. Residue E251 coordinates substrate. Residue G300 coordinates ATP.

Belongs to the class-II aminoacyl-tRNA synthetase family. EpmA subfamily. Homodimer.

The catalysed reaction is D-beta-lysine + L-lysyl-[protein] + ATP = N(6)-((3R)-3,6-diaminohexanoyl)-L-lysyl-[protein] + AMP + diphosphate + H(+). With EpmB is involved in the beta-lysylation step of the post-translational modification of translation elongation factor P (EF-P) on 'Lys-34'. Catalyzes the ATP-dependent activation of (R)-beta-lysine produced by EpmB, forming a lysyl-adenylate, from which the beta-lysyl moiety is then transferred to the epsilon-amino group of EF-P 'Lys-34'. The protein is Elongation factor P--(R)-beta-lysine ligase of Salmonella dublin (strain CT_02021853).